A 461-amino-acid chain; its full sequence is Putative 2,3-dihydroxypropane-1-sulfonate exporter (461 aa).

Residues 1 to 20 are Cytoplasmic-facing; that stretch reads MSHITTEDPATLRLPFKEKL. A helical membrane pass occupies residues 21–41; sequence SYGIGDLASNILLDIGTLYLL. Over 42-47 the chain is Periplasmic; that stretch reads KFYTDV. A helical transmembrane segment spans residues 48 to 68; it reads LGLPGTYGGIIFLISKFFTAF. Residues 69–92 are Cytoplasmic-facing; that stretch reads TDMGTGIMLDSRRKIGPKGKFRPF. A helical membrane pass occupies residues 93-113; that stretch reads ILYASFPVTLLAIANFVGTPF. At 114–123 the chain is on the periplasmic side; the sequence is DVTGKTVMAT. The helical transmembrane segment at 124 to 144 threads the bilayer; it reads ILFMLYGLFFSMMNCSYGAMV. Residues 145–162 are Cytoplasmic-facing; sequence PAITKNPNERASLAAWRQ. Residues 163 to 183 traverse the membrane as a helical segment; the sequence is GGATLGLLLCTVGFVPVMNLI. Residues 184–188 lie on the Periplasmic side of the membrane; the sequence is EGNQQ. The chain crosses the membrane as a helical span at residues 189–209; sequence LGYIFAATLFSLFGLLFMWIC. The Cytoplasmic segment spans residues 210–243; sequence YSGVKERYVETQPANPAQKPGLLQSFRAIAGNRP. The chain crosses the membrane as a helical span at residues 244-264; the sequence is LFILCIANLCTLGAFNVKLAI. The Periplasmic segment spans residues 265–276; the sequence is QVYYTQYVLNDP. The chain crosses the membrane as a helical span at residues 277-297; it reads ILLSYMGFFSMGCIFIGVFLM. Residues 298 to 308 lie on the Cytoplasmic side of the membrane; it reads PASVRRFGKKK. Residues 309–329 form a helical membrane-spanning segment; that stretch reads VYIGGLLIWVLGDLLNYFFGG. Residue G330 is a topological domain, periplasmic. The chain crosses the membrane as a helical span at residues 331–351; that stretch reads SVSFVAFSCLAFFGSAFVNSL. At 352-387 the chain is on the cytoplasmic side; that stretch reads NWALVSDTVEYGEWRTGVRSEGTVYTGFTFFRKVSQ. A helical transmembrane segment spans residues 388–408; that stretch reads ALAGFFPGWMLTQIGYVPNVA. Over 409-419 the chain is Periplasmic; that stretch reads QADHTIEGLRQ. A helical membrane pass occupies residues 420–440; that stretch reads LIFIYPSALAVVTIVAMGCFY. Over 441–461 the chain is Cytoplasmic; it reads SLNEKMYVRIVEEIEARKRTA.

It belongs to the sodium:galactoside symporter (TC 2.A.2) family.

The protein resides in the cell inner membrane. Functionally, could be involved in the export of 2,3-dihydroxypropane-1-sulfonate (DHPS). The sequence is that of Putative 2,3-dihydroxypropane-1-sulfonate exporter (yihP) from Escherichia coli (strain K12).